The sequence spans 113 residues: U11-theraphotoxin-Hhn1p (113 aa).

An N-terminal signal peptide occupies residues 1–21 (MNTVRVTFLLVFVLAVSLGQA). A propeptide spanning residues 22-74 (DKDENRMEMQEKTEQGKSYLDFAENLLLQKLEELEAKLLEEDSEESRNSRQKR) is cleaved from the precursor. The segment at 61–83 (EEDSEESRNSRQKRCIGEGVPCD) is disordered. 3 disulfides stabilise this stretch: Cys75–Cys90, Cys82–Cys95, and Cys89–Cys110.

The protein belongs to the neurotoxin 14 (magi-1) family. 01 (HNTX-16) subfamily. In terms of tissue distribution, expressed by the venom gland.

It is found in the secreted. Its function is as follows. Probable ion channel inhibitor. The sequence is that of U11-theraphotoxin-Hhn1p from Cyriopagopus hainanus (Chinese bird spider).